The sequence spans 142 residues: Large ribosomal subunit protein uL11 (142 aa).

It belongs to the universal ribosomal protein uL11 family. Part of the ribosomal stalk of the 50S ribosomal subunit. Interacts with L10 and the large rRNA to form the base of the stalk. L10 forms an elongated spine to which L12 dimers bind in a sequential fashion forming a multimeric L10(L12)X complex. Post-translationally, one or more lysine residues are methylated.

Functionally, forms part of the ribosomal stalk which helps the ribosome interact with GTP-bound translation factors. The chain is Large ribosomal subunit protein uL11 from Edwardsiella ictaluri (strain 93-146).